A 718-amino-acid polypeptide reads, in one-letter code: Quinohemoprotein alcohol dehydrogenase ADH-IIG (718 aa).

Residues 1 to 29 form the signal peptide; sequence MRQTGLASLPLKSLAVAVLLSLAGTPALA. E92 is a binding site for pyrroloquinoline quinone. C138 and C139 are joined by a disulfide. Pyrroloquinoline quinone-binding positions include R144, T189, and 205 to 206; that span reads GA. Residue E207 coordinates Ca(2+). A pyrroloquinoline quinone-binding site is contributed by T264. Ca(2+)-binding residues include N284 and D329. D329 functions as the Proton acceptor in the catalytic mechanism. Residue K356 coordinates pyrroloquinoline quinone. W415 is a binding site for substrate. Residues 419–420 and A571 each bind pyrroloquinoline quinone; that span reads DW. Residues 622–699 enclose the Cytochrome c domain; the sequence is ASIEAGAKLY…QIHQYLIKRA (78 aa). Residues C635, C638, H639, and M676 each coordinate heme c.

This sequence belongs to the bacterial PQQ dehydrogenase family. Monomer. The cofactor is pyrroloquinoline quinone. Ca(2+) serves as cofactor. Requires heme c as cofactor.

Its subcellular location is the periplasm. The enzyme catalyses 2 oxidized [azurin] + a primary alcohol = 2 reduced [azurin] + an aldehyde + 2 H(+). With respect to regulation, exhibits higher affinity for 1-butanol compared to 1,2-propanediol but inhibited by 10 mM 1-butanol. Functionally, catalyzes the dye-linked oxidation of primary alcohols to the corresponding aldehydes and the (subsequent) oxidation of the aldehydes to carboxylic acids. Active with primary alcohols, glycerol, 1,2-propanediol, 1,3-propanediol but not with methanol or sugar alcohols such as D-sorbitol. The polypeptide is Quinohemoprotein alcohol dehydrogenase ADH-IIG (Pseudomonas putida (Arthrobacter siderocapsulatus)).